The primary structure comprises 228 residues: 7-cyano-7-deazaguanine synthase (228 aa).

7–17 serves as a coordination point for ATP; that stretch reads LSGGMDSLVTT. Zn(2+) is bound by residues cysteine 187, cysteine 195, cysteine 198, and cysteine 201.

This sequence belongs to the QueC family. The cofactor is Zn(2+).

The catalysed reaction is 7-carboxy-7-deazaguanine + NH4(+) + ATP = 7-cyano-7-deazaguanine + ADP + phosphate + H2O + H(+). The protein operates within purine metabolism; 7-cyano-7-deazaguanine biosynthesis. In terms of biological role, catalyzes the ATP-dependent conversion of 7-carboxy-7-deazaguanine (CDG) to 7-cyano-7-deazaguanine (preQ(0)). In Chlorobium chlorochromatii (strain CaD3), this protein is 7-cyano-7-deazaguanine synthase.